The chain runs to 258 residues: uncharacterized protein (258 aa).

3 Solcar repeats span residues K9–R78, P81–K160, and D165–H246. Transmembrane regions (helical) follow at residues I11 to I31, G53 to E73, L87 to V107, M139 to K159, P171 to I191, and F218 to T239.

It belongs to the mitochondrial carrier (TC 2.A.29) family.

It localises to the mitochondrion inner membrane. This is an uncharacterized protein from Schizosaccharomyces pombe (strain 972 / ATCC 24843) (Fission yeast).